The chain runs to 262 residues: ABSCISIC ACID-INSENSITIVE 5-like protein 3 (262 aa).

3 positions are modified to phosphoserine: S21, S43, and S66. T104 carries the phosphothreonine modification. The bZIP domain maps to V190–K253. The basic motif stretch occupies residues R192 to K211. The tract at residues L218–L232 is leucine-zipper. Basic and acidic residues predominate over residues E239–W252. The interval E239–L262 is disordered.

Belongs to the bZIP family. ABI5 subfamily. As to quaternary structure, DNA-binding heterodimer with ABI5/DPBF1, DPBF2 or AREB3/DPBF3. Interacts with the AFP proteins AFP2, AFP3 and AFP4. In terms of tissue distribution, predominantly expressed in seeds.

Its subcellular location is the nucleus. Its function is as follows. Binds to the embryo specification element and the ABA-responsive element (ABRE) of the Dc3 gene promoter and to the ABRE of the Em1 gene promoter. Could participate in abscisic acid-regulated gene expression during seed development. This chain is ABSCISIC ACID-INSENSITIVE 5-like protein 3 (DPBF4), found in Arabidopsis thaliana (Mouse-ear cress).